Here is a 437-residue protein sequence, read N- to C-terminus: Cytochrome b (437 aa).

The chain crosses the membrane as a helical span at residues 45 to 65 (WIWGIVLAFTLVLQIVTGIVL). Residues histidine 97 and histidine 111 each coordinate heme b. 9 helical membrane-spanning segments follow: residues 100–120 (GASL…YYGS), 129–149 (WIVG…GYVL), 156–176 (FWGA…GPSI), 194–214 (FFSL…IHIW), 248–268 (FVIK…AVVA), 298–318 (FLPF…VILV), 330–350 (FFGV…PWLD), 365–385 (MWFW…AMPT), and 391–411 (WISL…LPLL). The heme b site is built by histidine 198 and histidine 212.

The protein belongs to the cytochrome b family. The main subunits of complex b-c1 are: cytochrome b, cytochrome c1 and the Rieske protein. Requires heme b as cofactor.

The protein resides in the cell membrane. Its function is as follows. Component of the ubiquinol-cytochrome c reductase complex (complex III or cytochrome b-c1 complex), which is a respiratory chain that generates an electrochemical potential coupled to ATP synthesis. The polypeptide is Cytochrome b (petB) (Rhodobacter capsulatus (Rhodopseudomonas capsulata)).